Here is a 3108-residue protein sequence, read N- to C-terminus: Probable polyketide synthase 39 (3108 aa).

The Ketosynthase family 3 (KS3) domain maps to Asp-9–Glu-440. Residues Cys-181, His-320, and His-363 each act as for beta-ketoacyl synthase activity in the active site. Residues Gly-643 to Tyr-676 are acyl/malonyl transferase. Catalysis depends on Ser-653, which acts as the For acyl/malonyl transferase activity. The interval His-939–Ile-1068 is N-terminal hotdog fold. One can recognise a PKS/mFAS DH domain in the interval His-939 to Ser-1265. His-980 (proton acceptor; for dehydratase activity) is an active-site residue. The C-terminal hotdog fold stretch occupies residues Asn-1085–Ser-1265. Residue Asp-1157 is the Proton donor; for dehydratase activity of the active site. Residues Asn-1375 to Asn-1435 form a disordered region. One can recognise a Carrier domain in the interval Gly-2566–Leu-2643. Ser-2603 bears the O-(pantetheine 4'-phosphoryl)serine mark. Residues Ile-2702 to Met-2722 form a helical membrane-spanning segment.

Requires pantetheine 4'-phosphate as cofactor.

The protein localises to the membrane. Functionally, probable polyketide synthase. The protein is Probable polyketide synthase 39 (pks39) of Dictyostelium discoideum (Social amoeba).